We begin with the raw amino-acid sequence, 854 residues long: MNKSTSSLDYIEKLPLPAEQAEVLREKLPQAAWNDQAVLHQALSEGSQPEGNQVNVQAEDDVALHSVQARLEMAWADGLDNGKQLGTDREGRAALKAMPVITRASMFPDVWRTNPLIRWWESLLGRTVPPRPHYSPEEKISENRWRLVGTIRRYILLALTLFQTAIATWYMKTILPYQGWALIDPFEMAGQPWTRSLMQLLPYVLQSGILVLFAVLFCWVSAGFWTALMGFLQLLIGRDKYSISSTTVGDEALNPEHRTALIMPICNEDVERVFAGLRATYESVEATGNLEHFDIYVLSDSNDPDICVAEQKAWMELCRDVGGAGRIFYRRRRRRVKRKSGNIDDFCRRWGNQYSYMVILDADSVMSGECLTSLVRLMEANPNAGIIQSSPKASGMDTLYARCQQFATRVYGPLFTAGLHFWQLGESHYWGHNAIIRVKPFIEHCALAPLPGEGSFAGAILSHDFVEAALMRRAGWGVWIAYDLPGSYEELPPNLLDELKRDRRWCHGNLMNFRLFLVKGMHPVHRAVFLTGVMSYLSAPLWFMFLVLSTALQVVHTLMEPQYFLQPRQLFPVWPQWRPELAIALFSTTLVLLFLPKLLSVILVWAKGAKEYGGAFRVFLSLLLEMLFSVLLAPVRMLFHTVFVVSAFLGWSVQWNSPQRDDDATPWSEAFVRHGSQLILGLVWAIGMAWLDLRFLWWLSPIVFSLILSPVVSVYSSRAALGLGCKRAKLLLIPEEFNPPRELVATDEYCRLNHQRRLDDGFMQAVFDPSVNALASAMATARHRFSRAIEDVREQNVREALNRKPEEVSNNQRLALLSDPVTISRMHYHVWQKPEAYAAWVEFYQKLPAPHIKS.

7 consecutive transmembrane segments (helical) span residues 155–175, 209–229, 528–548, 583–603, 619–639, 671–691, and 695–715; these read ILLA…KTIL, ILVL…TALM, VFLT…FLVL, IALF…SVIL, FLSL…RMLF, FVRH…MAWL, and FLWW…VSVY.

It belongs to the glycosyltransferase 2 family. OpgH subfamily.

The protein localises to the cell inner membrane. It functions in the pathway glycan metabolism; osmoregulated periplasmic glucan (OPG) biosynthesis. Functionally, involved in the biosynthesis of osmoregulated periplasmic glucans (OPGs). The sequence is that of Glucans biosynthesis glucosyltransferase H from Pectobacterium atrosepticum (strain SCRI 1043 / ATCC BAA-672) (Erwinia carotovora subsp. atroseptica).